The sequence spans 307 residues: Ornithine carbamoyltransferase (307 aa).

Residues 56 to 59, glutamine 83, arginine 107, and 134 to 137 each bind carbamoyl phosphate; these read STRT and HPCQ. L-ornithine contacts are provided by residues asparagine 165, aspartate 223, and 227–228; that span reads SM. Residues 263–264 and arginine 291 each bind carbamoyl phosphate; that span reads CL.

Belongs to the aspartate/ornithine carbamoyltransferase superfamily. OTCase family.

It localises to the cytoplasm. It catalyses the reaction carbamoyl phosphate + L-ornithine = L-citrulline + phosphate + H(+). Its pathway is amino-acid biosynthesis; L-arginine biosynthesis; L-arginine from L-ornithine and carbamoyl phosphate: step 1/3. In terms of biological role, reversibly catalyzes the transfer of the carbamoyl group from carbamoyl phosphate (CP) to the N(epsilon) atom of ornithine (ORN) to produce L-citrulline. The polypeptide is Ornithine carbamoyltransferase (Cupriavidus metallidurans (strain ATCC 43123 / DSM 2839 / NBRC 102507 / CH34) (Ralstonia metallidurans)).